The sequence spans 511 residues: GMP synthase [glutamine-hydrolyzing] (511 aa).

Residues 5 to 195 (MILVLDFGGQ…LYNICGCKGD (191 aa)) form the Glutamine amidotransferase type-1 domain. The Nucleophile role is filled by C82. Residues H169 and E171 contribute to the active site. The region spanning 196–386 (WKMSSFVENS…LGIPEDLVWR (191 aa)) is the GMPS ATP-PPase domain. 223 to 229 (SGGVDSS) contributes to the ATP binding site.

As to quaternary structure, homodimer.

It carries out the reaction XMP + L-glutamine + ATP + H2O = GMP + L-glutamate + AMP + diphosphate + 2 H(+). It functions in the pathway purine metabolism; GMP biosynthesis; GMP from XMP (L-Gln route): step 1/1. Functionally, catalyzes the synthesis of GMP from XMP. In Ruminiclostridium cellulolyticum (strain ATCC 35319 / DSM 5812 / JCM 6584 / H10) (Clostridium cellulolyticum), this protein is GMP synthase [glutamine-hydrolyzing].